The following is a 307-amino-acid chain: Protein EI24 homolog (307 aa).

The next 2 helical transmembrane spans lie at 53–73 (FIHC…IYLY) and 92–112 (MFTI…SIIA). N-linked (GlcNAc...) asparagine glycosylation is present at Asn135. Helical transmembrane passes span 153-173 (LFGV…TNFI), 175-195 (FVII…ILRG), 225-245 (FFFP…LFII), and 260-280 (GILP…NVIL).

It belongs to the EI24 family.

It is found in the membrane. The polypeptide is Protein EI24 homolog (Dictyostelium discoideum (Social amoeba)).